The sequence spans 519 residues: Cyclic AMP-responsive element-binding protein 3-like protein 1 (519 aa).

The interval 1–60 is required for transcription activation; the sequence is MDAVLEPFPADRLFPGSSFLDLGDLNESDFLNNAHFPEHLDHFVENMEDFSNDLFSSFFD. Residues 1–376 lie on the Cytoplasmic side of the membrane; sequence MDAVLEPFPA…MAATQTGTCL (376 aa). A Glycyl lysine isopeptide (Lys-Gly) (interchain with G-Cter in SUMO2) cross-link involves residue K184. A disordered region spans residues 200 to 259; sequence DLVQMPPTPPSSHGSDSDGSQSPRSLPPSSPVRPMARSSTAISTSPLLTAPHKLQGTSGP. Positions 210-223 are enriched in low complexity; sequence SSHGSDSDGSQSPR. Positions 236–246 are enriched in polar residues; the sequence is RSSTAISTSPL. The region spanning 290-353 is the bZIP domain; the sequence is ALKRVRRKIK…RTLLQQLQKL (64 aa). The tract at residues 292-321 is basic motif; the sequence is KRVRRKIKNKISAQESRRKKKEYVECLEKK. The leucine-zipper stretch occupies residues 332–353; the sequence is LWKKVETLETANRTLLQQLQKL. Residues 377 to 397 traverse the membrane as a helical; Signal-anchor for type II membrane protein segment; it reads MVAALCFVLVLGSLVPCLPAF. The short motif at 392-395 is the S2P recognition element; that stretch reads PCLP. Residues 398–519 lie on the Lumenal side of the membrane; the sequence is SSGSMTVKED…LGPNTTIKLS (122 aa). An S1P recognition motif is present at residues 423–426; it reads RSLL. Residues 449–519 are disordered; sequence EGWELKPGGP…LGPNTTIKLS (71 aa). A compositionally biased stretch (basic and acidic residues) spans 462–486; it reads RPQDHLRHDRADSIHETTKYLRETW. 3 N-linked (GlcNAc...) asparagine glycosylation sites follow: N493, N498, and N513.

This sequence belongs to the bZIP family. ATF subfamily. Interacts with SMAD4, the interaction takes place upon TGFB1 induction and SMAD4 acts as a CREB3L1 coactivator to induce the expression of genes involved in assembly of collagen extracellular matrix. In terms of processing, N-glycosylated. Post-translationally, ubiquitinated by HRD1/SYVN1; undergoes 'Lys-48'-linked ubiquitination, followed by rapid proteasomal degradation under normal conditions. Upon ER stress, SYVN1 E3 ubiquitin-protein ligase dissociates from its substrate, ubiquitination does not occur and CREB3L1 is stabilized. Upon ER stress or DNA damage, translocated to the Golgi apparatus, where it is processed by regulated intramembrane proteolysis (RIP) to release the cytosol-facing N-terminal transcription factor domain. The cleavage is performed sequentially by site-1 and site-2 proteases (S1P/MBTPS1 and S2P/MBTPS2). RIP is induced by TGFB1 and ceramide. As to expression, expressed in cortical and trabecular bones. Highly expressed in osteoblasts, but not detected in osteoclasts, nor in macrophages. Expressed at relatively low levels in lung and kidney. Weakly expressed in brain and spleen. Expressed in astrocytes.

The protein localises to the endoplasmic reticulum membrane. It localises to the nucleus. Its function is as follows. Precursor of the transcription factor form (Processed cyclic AMP-responsive element-binding protein 3-like protein 1), which is embedded in the endoplasmic reticulum membrane with N-terminal DNA-binding and transcription activation domains oriented toward the cytosolic face of the membrane. In response to ER stress or DNA damage, transported to the Golgi, where it is cleaved in a site-specific manner by resident proteases S1P/MBTPS1 and S2P/MBTPS2. The released N-terminal cytosolic domain is translocated to the nucleus where it activates transcription of specific target genes involved in the cell-cycle progression inhibition. In terms of biological role, transcription factor involved in cell type specific DNA damage and unfolded protein response (UPR). Binds the DNA consensus sequence 5'-GTGXGCXGC-3'. Plays a critical role in bone formation through the transcription of COL1A1, and possibly COL1A2, and the secretion of bone matrix proteins. Directly binds to the UPR element (UPRE)-like sequence in an osteoblast-specific COL1A1 promoter region and induces its transcription. Does not regulate COL1A1 in other tissues, such as skin. Required to protect astrocytes from ER stress-induced cell death. In astrocytes, binds to the cAMP response element (CRE) of the BiP/HSPA5 promoter and participate in its transcriptional activation. In astrocytes and osteoblasts, upon DNA damage, inhibits cell-cycle progression after G2/M phase by binding to promoters and activating transcription of genes encoding cell-cycle inhibitors, such as p21/CDKN1A. Required for TGFB1 to activate genes involved in the assembly of collagen extracellular matrix. This is Cyclic AMP-responsive element-binding protein 3-like protein 1 (Creb3l1) from Mus musculus (Mouse).